A 482-amino-acid polypeptide reads, in one-letter code: Proline--tRNA ligase (482 aa).

The protein belongs to the class-II aminoacyl-tRNA synthetase family. ProS type 3 subfamily. In terms of assembly, homodimer.

Its subcellular location is the cytoplasm. The catalysed reaction is tRNA(Pro) + L-proline + ATP = L-prolyl-tRNA(Pro) + AMP + diphosphate. Its function is as follows. Catalyzes the attachment of proline to tRNA(Pro) in a two-step reaction: proline is first activated by ATP to form Pro-AMP and then transferred to the acceptor end of tRNA(Pro). The sequence is that of Proline--tRNA ligase from Thermofilum pendens (strain DSM 2475 / Hrk 5).